We begin with the raw amino-acid sequence, 315 residues long: Methionyl-tRNA formyltransferase (315 aa).

Residue 113 to 116 participates in (6S)-5,6,7,8-tetrahydrofolate binding; sequence SLLP.

Belongs to the Fmt family.

It carries out the reaction L-methionyl-tRNA(fMet) + (6R)-10-formyltetrahydrofolate = N-formyl-L-methionyl-tRNA(fMet) + (6S)-5,6,7,8-tetrahydrofolate + H(+). Its function is as follows. Attaches a formyl group to the free amino group of methionyl-tRNA(fMet). The formyl group appears to play a dual role in the initiator identity of N-formylmethionyl-tRNA by promoting its recognition by IF2 and preventing the misappropriation of this tRNA by the elongation apparatus. This is Methionyl-tRNA formyltransferase from Escherichia coli O6:K15:H31 (strain 536 / UPEC).